Reading from the N-terminus, the 301-residue chain is 2-methylisocitrate lyase (301 aa).

53-55 (SGA) is a substrate binding site. Mg(2+) contacts are provided by aspartate 92 and aspartate 94. Residues 129–130 (CG), arginine 162, glutamate 192, 214–216 (NMT), arginine 245, and arginine 274 each bind substrate.

Belongs to the isocitrate lyase/PEP mutase superfamily. Methylisocitrate lyase family. Mg(2+) is required as a cofactor.

It carries out the reaction 3-hydroxybutane-1,2,3-tricarboxylate = pyruvate + succinate. Functionally, involved in the methylcitric acid cycle. Catalyzes the cleavage of 2-methylisocitrate to yield pyruvate and succinate. The chain is 2-methylisocitrate lyase from Bacillus subtilis (strain 168).